The primary structure comprises 1004 residues: Protein phosphatase 1 regulatory subunit 12A (1004 aa).

Residues 35 to 38 (KVKF) form an important for interaction with PPP1CB region. 6 ANK repeats span residues 39–68 (DDGA…DINY), 72–101 (DGLT…NINQ), 105–134 (EGWI…HVGA), 138–164 (EGDT…RQGV), 198–227 (SGGT…DVNI), and 231–260 (DGWT…DMEA). The segment covering 291 to 300 (HSEKREKKSP) has biased composition (basic and acidic residues). Residues 291–920 (HSEKREKKSP…SYLEDRKPYC (630 aa)) are disordered. Over residues 302-316 (IESTANLDNNQTQKT) the composition is skewed to polar residues. Basic and acidic residues-rich tracts occupy residues 318-329 (KNKETLIMEQEK) and 336-353 (SLEH…KDES). Acidic residues predominate over residues 357–369 (SEEEEDDDSESEA). A compositionally biased stretch (polar residues) spans 378–392 (ANANTTSTQSASMTA). Residues 417–427 (SPKEEERKDES) are compositionally biased toward basic and acidic residues. Residues 464–475 (RSASSPRLSSSL) show a composition bias toward low complexity. Over residues 476-486 (DNKEKEKDGKG) the composition is skewed to basic and acidic residues. Positions 514–525 (SSASSIRSGSSY) are enriched in low complexity. The segment covering 528-538 (RKWEEDVKKNS) has biased composition (basic and acidic residues). Residues 539-554 (LNEGPTSLNTSYQRSG) are compositionally biased toward polar residues. Low complexity-rich tracts occupy residues 564–578 (VSSN…VTSS) and 587–602 (ASAN…STSA). A compositionally biased stretch (basic and acidic residues) spans 613 to 624 (WAEDSTEKEKDS). The span at 625-659 (VPTAVTVPVAPSVVNAAATTTAMTTATSGTVSSTS) shows a compositional bias: low complexity. A compositionally biased stretch (basic and acidic residues) spans 672 to 681 (VRDEESESQR). The segment covering 682–692 (KARSRQARQSR) has biased composition (basic residues). The residue at position 695 (Thr695) is a Phosphothreonine; by ROCK2. Residues 717-765 (RTREQENEEKEKEEKEKQDKEKQEEKKESETKDDDYRQRYSRTVEEPYH) are compositionally biased toward basic and acidic residues. A compositionally biased stretch (low complexity) spans 770 to 793 (TSTSTSTSSTSSLSTSTSSLSSSS). Positions 794–808 (QLNRPNSLIGITSAY) are enriched in polar residues. The span at 812 to 837 (GTKESEREGGKKEEEKEEDKSQPKSI) shows a compositional bias: basic and acidic residues. Residues 838-849 (RERRRPREKRRS) show a composition bias toward basic residues. Thr850 is modified (phosphothreonine; by ROCK2). The segment covering 864-880 (QEHQSDSEEGTNKKETQ) has biased composition (basic and acidic residues). Polar residues predominate over residues 881-896 (SDSLSRYDTGSLSVSS).

In terms of assembly, PP1 comprises a catalytic subunit, PPP1CA, PPP1CB or PPP1CC, and one or several targeting or regulatory subunits. PPP1R12A mediates binding to myosin. Phosphorylated by CIT (Rho-associated kinase) and by ROCK2 on serine and threonine residues. Phosphorylation at Thr-695 leads to inhibition of myosin phosphatase activity. Phosphorylation at Thr-850 abolishes myosin binding. May be phosphorylated at Thr-695 by DMPK; may inhibit the myosin phosphatase activity. In terms of tissue distribution, detected in brain, lung, aorta, heart, gizzard, stomach, oviduct, spleen, kidney and small intestine.

Its subcellular location is the cytoplasm. It localises to the cytoskeleton. The protein localises to the stress fiber. In terms of biological role, regulates myosin phosphatase activity. This Gallus gallus (Chicken) protein is Protein phosphatase 1 regulatory subunit 12A (PPP1R12A).